We begin with the raw amino-acid sequence, 506 residues long: Anaerobic nitric oxide reductase transcription regulator NorR (506 aa).

A 4-aspartylphosphate modification is found at aspartate 57. In terms of domain architecture, Sigma-54 factor interaction spans 187-416 (MIGLSPAMTQ…LEHAIHRAVV (230 aa)). Residues 215 to 222 (GETGTGKE) and 278 to 287 (ADNGTLFLDE) contribute to the ATP site. A DNA-binding region (H-T-H motif) is located at residues 481–500 (WAASARALETDVANLHRLAK).

Its pathway is nitrogen metabolism; nitric oxide reduction. Its function is as follows. Required for the expression of anaerobic nitric oxide (NO) reductase, acts as a transcriptional activator for at least the norVW operon. Activation also requires sigma-54. The polypeptide is Anaerobic nitric oxide reductase transcription regulator NorR (Salmonella choleraesuis (strain SC-B67)).